A 422-amino-acid polypeptide reads, in one-letter code: F-box/WD repeat-containing protein 2 (422 aa).

Residues 54–101 (RDFLKLLPLELSFYLLKWLDPQTLLTCCLVSKQWNKVISACTEVWQTA) enclose the F-box domain. WD repeat units lie at residues 146–183 (GHSARVYALYYKDGLLCTGSDDLSAKLWDVSTGQCVYG), 185–221 (QTHTCAAVKFDEQKLVTGSFDNTVACWEWSSGARTQH), 224–265 (GHTG…NTLT), and 276–314 (LQKCKVKSLLHSPGDYILLSADKYEIKIWPIGREINCKC). Position 298 is an N6-acetyllysine (Lys298).

Directly interacts with SKP1 and CUL1. In terms of tissue distribution, widely expressed during embryogenesis and in adult tissues.

Substrate-recognition component of the SCF (SKP1-CUL1-F-box protein)-type E3 ubiquitin ligase complex. The chain is F-box/WD repeat-containing protein 2 (Fbxw2) from Mus musculus (Mouse).